Reading from the N-terminus, the 31-residue chain is Nemertide alpha-7 (31 aa).

Intrachain disulfides connect C2/C16, C9/C20, and C15/C26. At P29 the chain carries 4-hydroxyproline.

It belongs to the nemertide family. As to expression, confined to the epidermis and to the mucus layer.

It localises to the secreted. Functionally, potent toxin, demonstrating strong inhibitory effects on insect sodium channels (Nav) and reduced activity on mammalian sodium channels. Potently inhibits inactivation of insect sodium channels of B.germanica (BgNav1) (EC(50)=9.5 nM). The toxin also delays the inactivation of most mammalian Nav (human Nav1.1/SCN1A; EC(50)=171.5 nM, rat Nav1.2/SCN2A; EC(50)=50.4 nM, rat Nav1.3/SCN3A; EC(50)=170.2 nM, rat Nav1.4/SCN4A; EC(50)=810.6 nM, human Nav1.5/SCN5A; EC(50)=155.6 nM, mouse Nav1.6/SCN8A; EC(50)=147.6 nM, human Nav1.9/SCN9A; EC(50)=129 nM). Inactivation is completely prevented by a concentration of 1 uM, resulting in sustained, non-inactivating currents. In addition, the toxin significantly enhances the recovery from inactivation, and the open state is not required for the toxin to interact with the channel. In vivo, injection into brine shrimp (Artemia salina) stops movement or causes death after 24 hours (EC(50)=6.1 uM). The chain is Nemertide alpha-7 from Lineus ruber (Red bootlace).